The sequence spans 116 residues: Glycine-rich protein 3 short isoform (116 aa).

An N-terminal signal peptide occupies residues 1–24 (MASKTLLLLGLFAFLFIVSEMAAA). The segment at 27–83 (VKSESEETVKPEQHGGGFGDNGGGRYQGGGGHGGHGGGGYQGGGGRYQGGGGRQGGG) is disordered. The span at 29 to 39 (SESEETVKPEQ) shows a compositional bias: basic and acidic residues. The segment covering 40–83 (HGGGFGDNGGGRYQGGGGHGGHGGGGYQGGGGRYQGGGGRQGGG) has biased composition (gly residues). 5 repeat units span residues 54–59 (GGGGHG), 62–67 (GGGGYQ), 68–73 (GGGGRY), 75–80 (GGGGRQ), and 81–86 (GGGGSY). Residues 54 to 86 (GGGGHGGHGGGGYQGGGGRYQGGGGRQGGGGSY) form a 5 X 6 AA tandem repeats of G-G-G-G-[HYRS]-[GYQ] region.

It belongs to the GRP family. Interacts with WAK1 (via the extracellular domain). Component of a 500 kDa complex, composed of GRP3 or GRP3-S, WAK1 and KAPP.

It is found in the secreted. It localises to the extracellular space. The protein resides in the extracellular matrix. Functionally, regulates the function of the receptor protein kinase WAK1. The protein is Glycine-rich protein 3 short isoform (GRP3S) of Arabidopsis thaliana (Mouse-ear cress).